The sequence spans 232 residues: Large ribosomal subunit protein uL1 (232 aa).

It belongs to the universal ribosomal protein uL1 family. Part of the 50S ribosomal subunit.

Binds directly to 23S rRNA. The L1 stalk is quite mobile in the ribosome, and is involved in E site tRNA release. In terms of biological role, protein L1 is also a translational repressor protein, it controls the translation of the L11 operon by binding to its mRNA. This Rhizorhabdus wittichii (strain DSM 6014 / CCUG 31198 / JCM 15750 / NBRC 105917 / EY 4224 / RW1) (Sphingomonas wittichii) protein is Large ribosomal subunit protein uL1.